The chain runs to 210 residues: Amelogenin, X isoform (210 aa).

Positions M1–A16 are cleaved as a signal peptide. S32 is modified (phosphoserine). 2 stretches are compositionally biased toward low complexity: residues V109–P119 and P136–Q169. The tract at residues V109 to S187 is disordered. The span at P170 to P179 shows a compositional bias: pro residues.

This sequence belongs to the amelogenin family. In terms of assembly, interacts with KRT5. Post-translationally, several forms are produced by C-terminal processing. In terms of processing, phosphorylated by FAM20C in vitro.

It is found in the secreted. The protein localises to the extracellular space. The protein resides in the extracellular matrix. Functionally, plays a role in the biomineralization of teeth. Seems to regulate the formation of crystallites during the secretory stage of tooth enamel development. Thought to play a major role in the structural organization and mineralization of developing enamel. The sequence is that of Amelogenin, X isoform (Amelx) from Mus musculus (Mouse).